The sequence spans 74 residues: EMBRYO SURROUNDING FACTOR 1-like protein 4 (74 aa).

Positions 1-22 are cleaved as a signal peptide; sequence MKSSHAYLVCILLLSLFSLHQC. Cystine bridges form between cysteine 36–cysteine 51, cysteine 41–cysteine 70, cysteine 49–cysteine 66, and cysteine 52–cysteine 59.

Belongs to the MEG family. As to expression, expressed in flowers.

The sequence is that of EMBRYO SURROUNDING FACTOR 1-like protein 4 (ESFL4) from Arabidopsis thaliana (Mouse-ear cress).